The following is a 353-amino-acid chain: MLPSLQSLTKKVLAGQCVSVDHYHILKCCGLWWHNGPIMLHIRRNRIFIRSTCFSQGIELNIGLMKAVKENNHDLIKLFTEWGADINYGMICALTENTRDLCKELGAKEYLEREYILKIFFDTTRDKTSNNIIFCHEVFSNNPNLRIIDNLDLRGEIMWELRGLMEITFMLDHDDSFSTVLTKYWYAIAVDYDLKDAIRYFYQKYPRLHRWRLMCALFYNNVFDLHELYEIERVRMDIDEMMHIACVQDYSYSAIYYCFIMGANINQAMLVSIQNYNLGNLFFCIDLGANAFEEGKALAEQKGNYLIANALSLKHYNPVISLLSVVTDPEKINRMLKNYHSINMGIFLDYEQR.

The protein belongs to the asfivirus MGF 360 family. Interacts with host TBK1 ad IRF7.

Plays a role in virus cell tropism, and may be required for efficient virus replication in macrophages. In addition, inhibits the phosphorylation of host TBK1 and IRF7 and thereby negatively regulates the host cGAS signaling pathway and antagonizes IFN-mediated antiviral activity. In African swine fever virus (isolate Tick/South Africa/Pretoriuskop Pr4/1996) (ASFV), this protein is Protein MGF 360-11L.